Consider the following 263-residue polypeptide: UPF0246 protein Mmar10_0828 (263 aa).

It belongs to the UPF0246 family.

The polypeptide is UPF0246 protein Mmar10_0828 (Maricaulis maris (strain MCS10) (Caulobacter maris)).